The sequence spans 565 residues: Proline--tRNA ligase (565 aa).

The protein belongs to the class-II aminoacyl-tRNA synthetase family. ProS type 1 subfamily. As to quaternary structure, homodimer.

It localises to the cytoplasm. The enzyme catalyses tRNA(Pro) + L-proline + ATP = L-prolyl-tRNA(Pro) + AMP + diphosphate. Its function is as follows. Catalyzes the attachment of proline to tRNA(Pro) in a two-step reaction: proline is first activated by ATP to form Pro-AMP and then transferred to the acceptor end of tRNA(Pro). As ProRS can inadvertently accommodate and process non-cognate amino acids such as alanine and cysteine, to avoid such errors it has two additional distinct editing activities against alanine. One activity is designated as 'pretransfer' editing and involves the tRNA(Pro)-independent hydrolysis of activated Ala-AMP. The other activity is designated 'posttransfer' editing and involves deacylation of mischarged Ala-tRNA(Pro). The misacylated Cys-tRNA(Pro) is not edited by ProRS. The protein is Proline--tRNA ligase of Campylobacter lari (strain RM2100 / D67 / ATCC BAA-1060).